The chain runs to 513 residues: Ribonuclease Y (513 aa).

A helical transmembrane segment spans residues 6 to 26 (YIIIAVVIIIICVILGLYVVD). The region spanning 203–288 (TVHVVNLPND…EMVEKAKKEV (86 aa)) is the KH domain. The HD domain maps to 329-422 (VLKHSIEVSH…VQAADAISAA (94 aa)).

This sequence belongs to the RNase Y family.

The protein resides in the cell membrane. Endoribonuclease that initiates mRNA decay. The sequence is that of Ribonuclease Y from Clostridium botulinum (strain Langeland / NCTC 10281 / Type F).